The primary structure comprises 844 residues: Lysine-specific histone demethylase 1 homolog 1 (844 aa).

Residues 1-18 show a composition bias toward basic and acidic residues; it reads MSTETKETRPETKPEDLG. The tract at residues 1-131 is disordered; the sequence is MSTETKETRP…PGPRARKRRR (131 aa). Acidic residues predominate over residues 26–40; it reads PGEEPLGELIADDVN. Composition is skewed to polar residues over residues 46-62 and 107-118; these read ASAT…QSEQ and DLVTEQQSQNPN. The region spanning 154-255 is the SWIRM domain; that stretch reads GKEVDSEALI…FGLAPVIKEA (102 aa). Residues Glu295, Arg297, and Arg303 each coordinate FAD. The Nuclear localization signal signature appears at 516–523; sequence LKKGSIEF. FAD is bound at residue Glu679.

It belongs to the flavin monoamine oxidase family. Interacts with CZS. Interacts with OTU6/OTLD1. The cofactor is FAD. In terms of tissue distribution, expressed in the shoot and root apical regions of young seedlings. Expressed in cotyledons and inflorescences.

It is found in the nucleus. The protein localises to the cytoplasm. Its function is as follows. Probable histone demethylase that reduces the levels of histone H3 'Lys-4' methylation in chromatin of the floral repressor FLOWERING LOCUS C (FLC) and the sporophytically silenced floral repressor FWA. Seems to act in partial redundancy with FLOWERING LOCUS D (FLD) to repress FLC expression. Required for cytosine methylation of FWA. Controls primary seed dormancy by regulating DOG1 and abscisic acid signaling-related genes. In association with OTU6/OTLD1, involved in transcriptional gene repression via histone deubiquitination and demethylation. This Arabidopsis thaliana (Mouse-ear cress) protein is Lysine-specific histone demethylase 1 homolog 1.